The chain runs to 384 residues: MTRRRLLHAGTLAGVAALLPAAALAAPSQCGPWPLWSAFVDKHIQRDGRVVDFLNPDQRSTSEGQSYALFFALVNNDQVLFDKVLSWTRHNLCGGRPDLNLPAWLWGRDGSGAWRVLDANTASDGELWIAYALLEAGRLWSRPGFLKAGQQMLQLIRTQEVATLPGLGPMLLPGRTGFVDNGRWTLNPSYLPIQVLRRCANADPKGPWAAIAANSARVLRDSAPVGFAPDWTVWDGKTFNADPKRGNVGSYDAIRVYLWAGMLDAGEPLRARLLQDLSGPADLLAAQQTPAEKIDTARGVGTGALPVGFSAALLPYLSALGKPALLKAQAQRVPAATQPAAAALPYFERTLALFGQGWLENRYRFAADGRLLPAWRTPACAATT.

The first 25 residues, 1–25, serve as a signal peptide directing secretion; sequence MTRRRLLHAGTLAGVAALLPAAALA. Catalysis depends on glutamate 63, which acts as the Proton donor. Aspartate 124 acts as the Nucleophile in catalysis.

The protein belongs to the glycosyl hydrolase 8 (cellulase D) family.

It is found in the secreted. It carries out the reaction Endohydrolysis of (1-&gt;4)-beta-D-glucosidic linkages in cellulose, lichenin and cereal beta-D-glucans.. Its pathway is glycan metabolism; bacterial cellulose biosynthesis. In terms of biological role, hydrolyzes carboxymethylcellulose. The chain is Endoglucanase (bcsZ) from Xanthomonas axonopodis pv. citri (strain 306).